A 700-amino-acid chain; its full sequence is DNA ligase (700 aa).

NAD(+) is bound by residues 61–65 (DAEYD), 110–111 (SL), and Glu-141. Lys-143 (N6-AMP-lysine intermediate) is an active-site residue. Positions 164, 202, 321, and 345 each coordinate NAD(+). Cys-439, Cys-442, Cys-457, and Cys-462 together coordinate Zn(2+). The BRCT domain maps to 619 to 700 (AVSNKLAGLQ…EFLRLLEDSK (82 aa)).

This sequence belongs to the NAD-dependent DNA ligase family. LigA subfamily. Requires Mg(2+) as cofactor. Mn(2+) serves as cofactor.

It catalyses the reaction NAD(+) + (deoxyribonucleotide)n-3'-hydroxyl + 5'-phospho-(deoxyribonucleotide)m = (deoxyribonucleotide)n+m + AMP + beta-nicotinamide D-nucleotide.. Functionally, DNA ligase that catalyzes the formation of phosphodiester linkages between 5'-phosphoryl and 3'-hydroxyl groups in double-stranded DNA using NAD as a coenzyme and as the energy source for the reaction. It is essential for DNA replication and repair of damaged DNA. The polypeptide is DNA ligase (Hydrogenobaculum sp. (strain Y04AAS1)).